Reading from the N-terminus, the 308-residue chain is 4-hydroxyproline 2-epimerase (308 aa).

The active-site Proton acceptor is the C88. Substrate-binding positions include 89 to 90 (GH), H208, and D232. The Proton donor role is filled by C236. 237–238 (GT) lines the substrate pocket.

Belongs to the proline racemase family.

It catalyses the reaction trans-4-hydroxy-L-proline = cis-4-hydroxy-D-proline. Its function is as follows. Catalyzes the reversible epimerization of cis-4-hydroxy-D-proline (c4DHyp) to trans-4-hydroxy-L-proline (t4LHyp). May be involved in a degradation pathway that allows P.putida strain KT2440 to grow on either epimer of 4-hydroxyproline, c4DHyp and t4LHyp, as the sole carbon and nitrogen source. Does not exhibit measureable racemase activity in vitro with any of the 19 natural chiral amino acid enantiomers. The sequence is that of 4-hydroxyproline 2-epimerase from Pseudomonas putida (strain ATCC 47054 / DSM 6125 / CFBP 8728 / NCIMB 11950 / KT2440).